The sequence spans 168 residues: ATP synthase subunit b (168 aa).

Residues 11 to 31 traverse the membrane as a helical segment; the sequence is NTVLGNIIVVSGAFIILLVLL.

This sequence belongs to the ATPase B chain family. In terms of assembly, F-type ATPases have 2 components, F(1) - the catalytic core - and F(0) - the membrane proton channel. F(1) has five subunits: alpha(3), beta(3), gamma(1), delta(1), epsilon(1). F(0) has three main subunits: a(1), b(2) and c(10-14). The alpha and beta chains form an alternating ring which encloses part of the gamma chain. F(1) is attached to F(0) by a central stalk formed by the gamma and epsilon chains, while a peripheral stalk is formed by the delta and b chains.

Its subcellular location is the cell membrane. F(1)F(0) ATP synthase produces ATP from ADP in the presence of a proton or sodium gradient. F-type ATPases consist of two structural domains, F(1) containing the extramembraneous catalytic core and F(0) containing the membrane proton channel, linked together by a central stalk and a peripheral stalk. During catalysis, ATP synthesis in the catalytic domain of F(1) is coupled via a rotary mechanism of the central stalk subunits to proton translocation. Functionally, component of the F(0) channel, it forms part of the peripheral stalk, linking F(1) to F(0). This Lactococcus lactis subsp. lactis (strain IL1403) (Streptococcus lactis) protein is ATP synthase subunit b.